Reading from the N-terminus, the 175-residue chain is MEQQHIEVVGKLGSTYGIRGWLRIYSSTEQAESIFDYQPWFLKIKGEWQSIELENWRYHNHEIIVKLKGVDDREAAQILANVEIGVDLSVFPELEEGDYYWHDLIGCTVVNLEGYTMGTVTEMMETGSNDVLVVKANTKDAFGKQERLIPFLYEQVVKRVDLTTKTIEVDWDAGF.

The region spanning 96-175 (EGDYYWHDLI…TIEVDWDAGF (80 aa)) is the PRC barrel domain.

Belongs to the RimM family. In terms of assembly, binds ribosomal protein uS19.

It is found in the cytoplasm. An accessory protein needed during the final step in the assembly of 30S ribosomal subunit, possibly for assembly of the head region. Essential for efficient processing of 16S rRNA. May be needed both before and after RbfA during the maturation of 16S rRNA. It has affinity for free ribosomal 30S subunits but not for 70S ribosomes. This chain is Ribosome maturation factor RimM, found in Haemophilus influenzae (strain PittEE).